Reading from the N-terminus, the 211-residue chain is Glutathione S-transferase (211 aa).

The GST N-terminal domain maps to 3 to 87; sequence DNIVLYYFDA…YLSKKYNICG (85 aa). Glutathione contacts are provided by residues 58-59, 71-72, Asp-105, Lys-117, and Thr-121; these read QV and QS. A GST C-terminal domain is found at 89–211; that stretch reads SELNEFYADM…YITNRKESVY (123 aa).

It belongs to the GST superfamily. In terms of assembly, homodimer. In the absence of ligands two homodimers may interact to form a tetramer.

The catalysed reaction is RX + glutathione = an S-substituted glutathione + a halide anion + H(+). Inhibited by chloroquine, cibacron blue, ferriprotoporphyrin IX (hemin) and S-hexylglutathione. Conjugation of reduced glutathione to a wide number of exogenous and endogenous hydrophobic electrophiles. May also function as a storage protein or ligandin for parasitotoxic ferriprotoporphyrin IX (hemin). The protein is Glutathione S-transferase of Plasmodium falciparum (isolate 3D7).